Consider the following 370-residue polypeptide: MTTPTPLRSVTVNTPPPYTIAIGPGLLHDPPRLAATIRGRHALILSDSEVAPRYAAQLHETLLRARPDLHLNVFTLPAGETSKSLENFGAAIAQLATLGATRDACLFALGGGVIGDLAGFTAACWMRGIDYVQVPTTLLAMVDSSVGGKTAVDIPQGKNMVGAFHPPRAVIADTDTLATLPLRELRAGLSEVIKYGAIRDPVFFHWLQTTREALLARDPAALAQAIARSCEHKADIVGRDPLEKGERVLLNLGHTFGHAIETTQGYSTPGSNNLNHGEAVAVGMVLAARLSNTLGLAPAEDTETLKNLLDAYGLPTVLPSGLTPEMLLERMRLDKKNIAGRLRLVLWRGIGHAEAVPDVDEAAVRQILAN.

NAD(+) contacts are provided by residues 112-116 (GVIGD), 136-137 (TT), Lys-149, Lys-158, and 176-179 (TLAT). Zn(2+) is bound by residues Glu-191, His-254, and His-276.

The protein belongs to the sugar phosphate cyclases superfamily. Dehydroquinate synthase family. Co(2+) serves as cofactor. It depends on Zn(2+) as a cofactor. NAD(+) is required as a cofactor.

It is found in the cytoplasm. The enzyme catalyses 7-phospho-2-dehydro-3-deoxy-D-arabino-heptonate = 3-dehydroquinate + phosphate. The protein operates within metabolic intermediate biosynthesis; chorismate biosynthesis; chorismate from D-erythrose 4-phosphate and phosphoenolpyruvate: step 2/7. Its function is as follows. Catalyzes the conversion of 3-deoxy-D-arabino-heptulosonate 7-phosphate (DAHP) to dehydroquinate (DHQ). This is 3-dehydroquinate synthase from Xylella fastidiosa (strain M23).